Reading from the N-terminus, the 341-residue chain is Dihydroorotate dehydrogenase (quinone) (341 aa).

FMN is bound by residues 62 to 66 (AGMDK) and T86. Residue K66 participates in substrate binding. Position 111–115 (111–115 (NRMGF)) interacts with substrate. Residues N139 and N172 each coordinate FMN. N172 is a binding site for substrate. S175 functions as the Nucleophile in the catalytic mechanism. N177 contributes to the substrate binding site. FMN contacts are provided by K217 and T245. A substrate-binding site is contributed by 246–247 (NT). FMN contacts are provided by residues G268, G297, and 318–319 (YS).

The protein belongs to the dihydroorotate dehydrogenase family. Type 2 subfamily. Monomer. It depends on FMN as a cofactor.

The protein resides in the cell membrane. The enzyme catalyses (S)-dihydroorotate + a quinone = orotate + a quinol. It participates in pyrimidine metabolism; UMP biosynthesis via de novo pathway; orotate from (S)-dihydroorotate (quinone route): step 1/1. In terms of biological role, catalyzes the conversion of dihydroorotate to orotate with quinone as electron acceptor. The protein is Dihydroorotate dehydrogenase (quinone) of Shewanella loihica (strain ATCC BAA-1088 / PV-4).